Here is a 119-residue protein sequence, read N- to C-terminus: Large ribosomal subunit protein uL18 (119 aa).

Belongs to the universal ribosomal protein uL18 family. As to quaternary structure, part of the 50S ribosomal subunit; part of the 5S rRNA/L5/L18/L25 subcomplex. Contacts the 5S and 23S rRNAs.

This is one of the proteins that bind and probably mediate the attachment of the 5S RNA into the large ribosomal subunit, where it forms part of the central protuberance. The chain is Large ribosomal subunit protein uL18 from Xanthomonas oryzae pv. oryzae (strain PXO99A).